A 370-amino-acid polypeptide reads, in one-letter code: Ubiquitin carboxyl-terminal hydrolase 12 (370 aa).

The short motif at 1–4 (MEIL) is the Required for plasma membrane localization of USP12/WDR20 element. Residues 39 to 369 (FGLVNFGNTC…SGYILFYQSR (331 aa)) form the USP domain. Catalysis depends on C48, which acts as the Nucleophile. Positions 145–169 (KQEKQNGRLPNGNIDNENNNSTPDP) are disordered. Over residues 157–168 (NIDNENNNSTPD) the composition is skewed to polar residues. Zn(2+) contacts are provided by C186, C189, C233, and C236. Residue H317 is the Proton acceptor of the active site.

Belongs to the peptidase C19 family. USP12/USP46 subfamily. Interacts with WDR48. Interacts with WDR20; this interaction promotes translocation of the USP12 complex to the plasma membrane. Component of the USP12-WDR20-WDR48 deubiquitinating complex. Component of the USP12-DMWD-WDR48 deubiquitinating complex. Interacts with PHLPP1. Interacts with RBPJ. Interacts with CBP; this interaction blocks the acetyltransferase activity of CREBBP. Interacts with ITCH; the interaction is more efficient when both USP12 and WDR48/UAF1 are involved and may mediate recruitment of the USP12 deubiquitinating complex to Notch. Interacts with OPTN and SQSTM1/p62; the interaction is independent of deubiquitinase activity and may be involved in regulation of autophagic flux. In terms of assembly, (Microbial infection) Interacts with Epstein-Barr virus protein EBNA3.

The protein localises to the nucleus. The protein resides in the cytoplasm. It is found in the cell membrane. The catalysed reaction is Thiol-dependent hydrolysis of ester, thioester, amide, peptide and isopeptide bonds formed by the C-terminal Gly of ubiquitin (a 76-residue protein attached to proteins as an intracellular targeting signal).. Activated by interaction with WDR20, WDR48 and DMWD through different allosteric mechanisms. Its function is as follows. Deubiquitinating enzyme that plays various roles in the regulation of the immune response and inflammation. During TCR engagement and activation, translocates into the cytoplasm and deubiquitinates its substrates LAT and TRAT1 and prevents their lysosome-dependent degradation to stabilize the TCR signaling complex at the plasma membrane. Plays an essential role in the selective LPS-induced macrophage response through the activation of NF-kappa-B pathway. In addition, promotes that antiviral immune response through targeting DNA sensor IFI16 to inhibit its proteasome-dependent degradation. Participates in the interferon signaling pathway and antiviral response independently of its deubiquitinase activity by maintaining nuclear phosphorylated STAT1 levels via inhibition of its CREBBP-mediated acetylation and subsequent dephosphorylation. Plays an intrinsic role in promoting the differentiation, activation and proliferation of CD4(+) T-cell by activating the NF-kappa-B signaling pathway through deubiquitinating and stabilizing B-cell lymphoma/leukemia 10/BCL10. In myeloid-derived suppressor cells promotes the activation of the NF-kappa-B via deubiquitination and stabilization of RELA. Regulates the 'Lys-63'-linked polyubiquitin chains of BAX and thereby modulates the mitochondrial apoptotic process. Negative regulator of NOTCH signaling that specifically deubiquitinates non-activated NOTCH receptors to target them for lysosomal degradation; deubiquitination of NOTCH stimulates its transport form late endosomes to lysosomes. Protects neurons against HTT/huntingtin-induced polyglutamine expansion-dependent neurodegeneration through regulation of autophagic flux. This function is independent of deubiquitinase activity or of other components of the USP12-WDR20-WDR48 deubiquitinating complex. In complex with WDR48, acts as a potential tumor suppressor by positively regulating PHLPP1 stability. Functionally, (Microbial infection) Forms a complex with Epstein-Barr virus protein EBNA3 which is an active deubiquitinase activity that may select specific substrates to promote B-lymphocyte transformation. This Homo sapiens (Human) protein is Ubiquitin carboxyl-terminal hydrolase 12 (USP12).